The primary structure comprises 493 residues: Galactose-1-phosphate uridylyltransferase (493 aa).

Belongs to the galactose-1-phosphate uridylyltransferase type 2 family.

It localises to the cytoplasm. The catalysed reaction is alpha-D-galactose 1-phosphate + UDP-alpha-D-glucose = alpha-D-glucose 1-phosphate + UDP-alpha-D-galactose. The protein operates within carbohydrate metabolism; galactose metabolism. The sequence is that of Galactose-1-phosphate uridylyltransferase from Streptococcus thermophilus (strain CNRZ 1066).